We begin with the raw amino-acid sequence, 149 residues long: Calmodulin (149 aa).

Ala-2 bears the N-acetylalanine mark. EF-hand domains are found at residues 8-43, 44-79, 81-116, and 117-149; these read EQIA…LGQN, PTEA…KMKD, DSEE…LGEK, and LTDE…MTSK. Residues Asp-21, Asp-23, Asp-25, Thr-27, Glu-32, Asp-57, Asp-59, Asp-61, Thr-63, Glu-68, Asp-94, Asp-96, Asn-98, and Glu-105 each coordinate Ca(2+). Lys-116 is modified (N6,N6,N6-trimethyllysine). Positions 130, 132, 134, 136, and 141 each coordinate Ca(2+).

Belongs to the calmodulin family.

Functionally, calmodulin mediates the control of a large number of enzymes, ion channels and other proteins by Ca(2+). Among the enzymes to be stimulated by the calmodulin-Ca(2+) complex are a number of protein kinases and phosphatases. This Pyuridae sp. (Sea squirt) protein is Calmodulin.